The primary structure comprises 125 residues: Large ribosomal subunit protein bL12 (125 aa).

It belongs to the bacterial ribosomal protein bL12 family. As to quaternary structure, homodimer. Part of the ribosomal stalk of the 50S ribosomal subunit. Forms a multimeric L10(L12)X complex, where L10 forms an elongated spine to which 2 to 4 L12 dimers bind in a sequential fashion. Binds GTP-bound translation factors.

In terms of biological role, forms part of the ribosomal stalk which helps the ribosome interact with GTP-bound translation factors. Is thus essential for accurate translation. The sequence is that of Large ribosomal subunit protein bL12 from Caldanaerobacter subterraneus subsp. tengcongensis (strain DSM 15242 / JCM 11007 / NBRC 100824 / MB4) (Thermoanaerobacter tengcongensis).